Reading from the N-terminus, the 183-residue chain is Adenine phosphoribosyltransferase (183 aa).

The protein belongs to the purine/pyrimidine phosphoribosyltransferase family. As to quaternary structure, homodimer.

It is found in the cytoplasm. It catalyses the reaction AMP + diphosphate = 5-phospho-alpha-D-ribose 1-diphosphate + adenine. The protein operates within purine metabolism; AMP biosynthesis via salvage pathway; AMP from adenine: step 1/1. Its function is as follows. Catalyzes a salvage reaction resulting in the formation of AMP, that is energically less costly than de novo synthesis. The polypeptide is Adenine phosphoribosyltransferase (Salmonella arizonae (strain ATCC BAA-731 / CDC346-86 / RSK2980)).